We begin with the raw amino-acid sequence, 324 residues long: Adenine deaminase (324 aa).

3 residues coordinate Zn(2+): His-11, His-13, and His-189. Glu-192 (proton donor) is an active-site residue. Position 270 (Asp-270) interacts with Zn(2+). Asp-271 is a binding site for substrate.

This sequence belongs to the metallo-dependent hydrolases superfamily. Adenosine and AMP deaminases family. Adenine deaminase type 2 subfamily. The cofactor is Zn(2+).

The catalysed reaction is adenine + H2O + H(+) = hypoxanthine + NH4(+). In terms of biological role, catalyzes the hydrolytic deamination of adenine to hypoxanthine. Plays an important role in the purine salvage pathway and in nitrogen catabolism. This is Adenine deaminase from Sinorhizobium medicae (strain WSM419) (Ensifer medicae).